A 206-amino-acid chain; its full sequence is FMN-dependent NADH:quinone oxidoreductase (206 aa).

Residues 15-17 (SVS), 94-97 (MYNF), and 138-141 (TRGG) contribute to the FMN site.

The protein belongs to the azoreductase type 1 family. Homodimer. It depends on FMN as a cofactor.

It carries out the reaction 2 a quinone + NADH + H(+) = 2 a 1,4-benzosemiquinone + NAD(+). The enzyme catalyses N,N-dimethyl-1,4-phenylenediamine + anthranilate + 2 NAD(+) = 2-(4-dimethylaminophenyl)diazenylbenzoate + 2 NADH + 2 H(+). Quinone reductase that provides resistance to thiol-specific stress caused by electrophilic quinones. Its function is as follows. Also exhibits azoreductase activity. Catalyzes the reductive cleavage of the azo bond in aromatic azo compounds to the corresponding amines. The sequence is that of FMN-dependent NADH:quinone oxidoreductase from Sinorhizobium medicae (strain WSM419) (Ensifer medicae).